Here is a 258-residue protein sequence, read N- to C-terminus: MKEILITNDDGYESEGLKKLVKMLKKEFKAKITIVAPASEKSACSHSITLTKPLRFVKVGKRFYKLDDGTPADCVYLAFHALYKTRLPDLVISGINKGANVGEDITYSGTCAGAMEAALQGISAIALSQFYKKSEKELDYKNALKITKKIIQNIFDKDFPLEKKEFLNINFPAKSKIKGIKICKAGKRVYNFEAHSNINPRGVEYYWLAAANLDFEDEKNSDIVLLKKGYATITPIMLDLTAYERMKKVKKWLKANNE.

Positions 9, 10, 42, and 96 each coordinate a divalent metal cation.

The protein belongs to the SurE nucleotidase family. It depends on a divalent metal cation as a cofactor.

It localises to the cytoplasm. The enzyme catalyses a ribonucleoside 5'-phosphate + H2O = a ribonucleoside + phosphate. Its function is as follows. Nucleotidase that shows phosphatase activity on nucleoside 5'-monophosphates. The protein is 5'-nucleotidase SurE of Campylobacter jejuni subsp. doylei (strain ATCC BAA-1458 / RM4099 / 269.97).